Consider the following 937-residue polypeptide: Protocadherin alpha-7 (937 aa).

Positions M1 to G29 are cleaved as a signal peptide. Cadherin domains lie at Q30 to F133, P134 to F242, D243 to L350, T351 to F455, A456 to L565, and V581 to A678. Over Q30–N697 the chain is Extracellular. A disulfide bridge links C96 with C102. N254 and N265 each carry an N-linked (GlcNAc...) asparagine glycan. N548 carries N-linked (GlcNAc...) asparagine glycosylation. A helical membrane pass occupies residues V698 to Y718. Topologically, residues T719–Q937 are cytoplasmic. Disordered stretches follow at residues Q756–Y795 and A817–P843. PXXP repeat units follow at residues P774 to P777, P786 to P789, P819 to P822, P860 to P863, and P878 to P881. The interval P774 to P881 is 5 X 4 AA repeats of P-X-X-P. A compositionally biased stretch (polar residues) spans S775 to R787. Positions Q888–Q937 are disordered. A compositionally biased stretch (basic and acidic residues) spans D896–K910.

As to quaternary structure, forms homodimers in trans (molecules expressed by two different cells). Forms promiscuous heterodimers in cis (at the plasma membrane of the same cell) with other protocadherins.

It localises to the cell membrane. Its function is as follows. Calcium-dependent cell-adhesion protein involved in cells self-recognition and non-self discrimination. Thereby, it is involved in the establishment and maintenance of specific neuronal connections in the brain. This chain is Protocadherin alpha-7, found in Pan troglodytes (Chimpanzee).